A 467-amino-acid chain; its full sequence is Uronate isomerase (467 aa).

This sequence belongs to the metallo-dependent hydrolases superfamily. Uronate isomerase family.

The enzyme catalyses D-glucuronate = D-fructuronate. The catalysed reaction is aldehydo-D-galacturonate = keto-D-tagaturonate. It functions in the pathway carbohydrate metabolism; pentose and glucuronate interconversion. In Staphylococcus haemolyticus (strain JCSC1435), this protein is Uronate isomerase.